A 176-amino-acid chain; its full sequence is Nutrient stress-induced DNA-binding protein (176 aa).

Belongs to the Dps family. Hexamer.

In terms of biological role, involved in protection of chromosomal DNA from damage under nutrient-limited and oxidative stress conditions. Binds heme. This chain is Nutrient stress-induced DNA-binding protein (dpsA), found in Synechococcus sp. (strain ATCC 27144 / PCC 6301 / SAUG 1402/1) (Anacystis nidulans).